We begin with the raw amino-acid sequence, 220 residues long: Chloramphenicol acetyltransferase (220 aa).

Residue His195 is the Proton acceptor of the active site.

Belongs to the chloramphenicol acetyltransferase family. Homotrimer.

The enzyme catalyses chloramphenicol + acetyl-CoA = chloramphenicol 3-acetate + CoA. In terms of biological role, this enzyme is an effector of chloramphenicol resistance in bacteria. In Streptomyces acrimycini, this protein is Chloramphenicol acetyltransferase (cat).